A 120-amino-acid polypeptide reads, in one-letter code: Secreted RxLR effector protein 29 (120 aa).

An N-terminal signal peptide occupies residues 1 to 21; the sequence is MRRTAFIVLSLVALIAPCVTS. The short motif at 47–64 is the RxLR-dEER element; it reads RHLRSEANGRLAVVDEEK.

It belongs to the RxLR effector family.

It is found in the secreted. It localises to the host cytoplasm. The protein localises to the host nucleus. Effector that acts as a broad suppressor of cell death to interrupt plant immunity. Inhibits cell death induced by cell death-inducing proteins, including the PAMP elicitor INF1 from P.infestans. The chain is Secreted RxLR effector protein 29 from Plasmopara viticola (Downy mildew of grapevine).